An 810-amino-acid chain; its full sequence is MVTEEDKEQILNIKIEDEVKTSYLNYAMSVIVSRALPDVRDGLKPVHRRILYSMHEMGLRADKAFKKAGRIVGDVLGKYHPHGDQSIYEALVRLAQDFSLRYPIVIGQGNFGSIDGDPPAAMRYTEARMARVAEELVRDIDKQTVDFRANYDDSLLEPEVLPAAFPFLLVNGSSGIAVGMATNMAPHNLKEICDAIVYMLDHDSVSVYDLIEIVKGPDFPTYAEIIYNESLIKAYTTGKGSVVIRARYHIEEKFEDHIAIIITQIPYAVNKSSLLMKIAFLIKEEKLEGVSDIRDESDREGIRIVLEIKKGFDPHVVMNLLYEYTELRKNFSINNLALVNGIPKQLNLKELISAFIEHRKEIVRRRVEFDLKRAREKAHILEGLNIALRNIDRVIEIIRFARLVKDAKECIIKEFNLSEIQANSILDMKLQKLTSIETEKLEEEFKILLALIKDYEDILNSPERVVNIVREEIINLSLKFGDERRTKIIYDEEVLKTSMSDLMQRENVIVILTKQGFIKRILQDEYKLQGIGGKGLGSFDLQDRDQVNITLCVNTHDFLFMISNEGKLYVINAYGIKDTSRTSKGQNVRELINLGETEEILAIKNCNELSVDNYLLITTANGKIARIETEGFKTVKARGVIVIKLDDNDFVTSAEIVSKNEKIICISKKGNAFAFNSDNIRLTHRGTQGVSGMKVREGDVLIKALAVKQGSHLLVVSENGYGKRLEISKVTDLKRGATGYTCYKKSDEKAGEVVDAITVVQDDEILLVSKGAKVLRTLVDKISEQGKDARGMQVLSLDEDKLISVSKFIK.

A Topo IIA-type catalytic domain is found at 36–502; it reads LPDVRDGLKP…EVLKTSMSDL (467 aa). The active-site O-(5'-phospho-DNA)-tyrosine intermediate is the Y124. Residues 529–535 carry the GyrA-box motif; it reads QGIGGKG.

This sequence belongs to the type II topoisomerase GyrA/ParC subunit family. In terms of assembly, heterotetramer, composed of two GyrA and two GyrB chains. In the heterotetramer, GyrA contains the active site tyrosine that forms a transient covalent intermediate with DNA, while GyrB binds cofactors and catalyzes ATP hydrolysis.

It localises to the cytoplasm. It carries out the reaction ATP-dependent breakage, passage and rejoining of double-stranded DNA.. Functionally, a type II topoisomerase that negatively supercoils closed circular double-stranded (ds) DNA in an ATP-dependent manner to modulate DNA topology and maintain chromosomes in an underwound state. Negative supercoiling favors strand separation, and DNA replication, transcription, recombination and repair, all of which involve strand separation. Also able to catalyze the interconversion of other topological isomers of dsDNA rings, including catenanes and knotted rings. Type II topoisomerases break and join 2 DNA strands simultaneously in an ATP-dependent manner. The chain is DNA gyrase subunit A from Borrelia hermsii (strain HS1 / DAH).